Consider the following 226-residue polypeptide: MAITDWPEGERPRERLLAHGPAALSDAELLAIYLRVGVRGKSAVDLARDLLHRFDGRLGTLAEASLEELASVSGIGMAKAAQLKASFELTRRALSQEMATRDSFTSPGKVRDWLRLKLASRGHEVFMALWLDAQNQLLKAEELFTGTLTQTSVYPREVVKAALAHNAAAVILAHNHPSGIAEPSRADEMLTRSLKEALAMVDVKVLDHFIVAGNTPPLSFAERGLL.

The 124-residue stretch at 103 to 226 (SFTSPGKVRD…PLSFAERGLL (124 aa)) folds into the MPN domain. 3 residues coordinate Zn(2+): histidine 174, histidine 176, and aspartate 187. The short motif at 174 to 187 (HNHPSGIAEPSRAD) is the JAMM motif element.

This sequence belongs to the UPF0758 family.

This Dechloromonas aromatica (strain RCB) protein is UPF0758 protein Daro_3142.